The sequence spans 334 residues: Ribosomal RNA small subunit methyltransferase H (334 aa).

Residues 1 to 21 (MNALPIRTAAPSGHSGGHSST) are disordered. S-adenosyl-L-methionine contacts are provided by residues 52–54 (GGY), Asp71, Phe98, Asp119, and Gln126.

Belongs to the methyltransferase superfamily. RsmH family.

The protein localises to the cytoplasm. The catalysed reaction is cytidine(1402) in 16S rRNA + S-adenosyl-L-methionine = N(4)-methylcytidine(1402) in 16S rRNA + S-adenosyl-L-homocysteine + H(+). Functionally, specifically methylates the N4 position of cytidine in position 1402 (C1402) of 16S rRNA. This chain is Ribosomal RNA small subunit methyltransferase H, found in Granulibacter bethesdensis (strain ATCC BAA-1260 / CGDNIH1).